A 339-amino-acid chain; its full sequence is tRNA N6-adenosine threonylcarbamoyltransferase (339 aa).

Residues histidine 111 and histidine 115 each contribute to the Fe cation site. Substrate is bound by residues 139–143 (LVSGG), aspartate 172, glycine 185, aspartate 189, and asparagine 280. Residue aspartate 308 participates in Fe cation binding.

The protein belongs to the KAE1 / TsaD family. It depends on Fe(2+) as a cofactor.

The protein resides in the cytoplasm. It carries out the reaction L-threonylcarbamoyladenylate + adenosine(37) in tRNA = N(6)-L-threonylcarbamoyladenosine(37) in tRNA + AMP + H(+). In terms of biological role, required for the formation of a threonylcarbamoyl group on adenosine at position 37 (t(6)A37) in tRNAs that read codons beginning with adenine. Is involved in the transfer of the threonylcarbamoyl moiety of threonylcarbamoyl-AMP (TC-AMP) to the N6 group of A37, together with TsaE and TsaB. TsaD likely plays a direct catalytic role in this reaction. In Phocaeicola vulgatus (strain ATCC 8482 / DSM 1447 / JCM 5826 / CCUG 4940 / NBRC 14291 / NCTC 11154) (Bacteroides vulgatus), this protein is tRNA N6-adenosine threonylcarbamoyltransferase.